We begin with the raw amino-acid sequence, 179 residues long: Large ribosomal subunit protein uL6 (179 aa).

This sequence belongs to the universal ribosomal protein uL6 family. In terms of assembly, part of the 50S ribosomal subunit.

Its function is as follows. This protein binds to the 23S rRNA, and is important in its secondary structure. It is located near the subunit interface in the base of the L7/L12 stalk, and near the tRNA binding site of the peptidyltransferase center. The polypeptide is Large ribosomal subunit protein uL6 (Mycobacterium sp. (strain KMS)).